The chain runs to 492 residues: 5-taurinomethyluridine-[tRNA] synthase subunit GTPB3, mitochondrial (492 aa).

The N-terminal 20 residues, Met1–Cys20, are a transit peptide targeting the mitochondrion. Residues Arg52, Glu112, and Lys152 each coordinate 5,10-methylenetetrahydrofolate. Positions Gly249 to Ala416 constitute a TrmE-type G domain. GTP is bound by residues Gly256–Ser263, Gly282–Asp286, Asp303–Gly306, and Asn374–Asp377. Asn259 contributes to the K(+) binding site. Residues Ser263 and Thr284 each contribute to the Mg(2+) site. Position 492 (Lys492) interacts with 5,10-methylenetetrahydrofolate.

Belongs to the TRAFAC class TrmE-Era-EngA-EngB-Septin-like GTPase superfamily. TrmE GTPase family. Homodimer; forms a dimer in the presence of potassium. Interacts with MTO1; forms the GTPBP3-MTO1 complex composed of homodimers of GTPBP3 and MTO1. The cofactor is K(+).

The protein localises to the mitochondrion. It carries out the reaction GTP + H2O = GDP + phosphate + H(+). In terms of biological role, GTPase component of the GTPBP3-MTO1 complex that catalyzes the 5-taurinomethyluridine (taum(5)U) modification at the 34th wobble position (U34) of mitochondrial tRNAs (mt-tRNAs), which plays a role in mt-tRNA decoding and mitochondrial translation. Taum(5)U formation on mammalian mt-tRNA requires the presence of both GTPBP3-mediated GTPase activity and MTO1 catalytic activity. The protein is 5-taurinomethyluridine-[tRNA] synthase subunit GTPB3, mitochondrial of Rattus norvegicus (Rat).